Here is a 1034-residue protein sequence, read N- to C-terminus: Multidrug export protein AcrF (1034 aa).

The Cytoplasmic portion of the chain corresponds to 1-9; that stretch reads MANFFIRRP. Residues 10-28 traverse the membrane as a helical segment; that stretch reads IFAWVLAIILMMAGALAIL. Residues 29-339 lie on the Periplasmic side of the membrane; that stretch reads QLPVAQYPTI…TPFVQLSIHE (311 aa). Residues 340–359 form a helical membrane-spanning segment; sequence VVKTLFEAIMLVFLVMYLFL. Residues 360–365 lie on the Cytoplasmic side of the membrane; the sequence is QNMRAT. A helical transmembrane segment spans residues 366 to 385; that stretch reads LIPTIAVPVVLLGTFAILAA. The Periplasmic portion of the chain corresponds to 386–391; it reads FGYSIN. The helical transmembrane segment at 392 to 413 threads the bilayer; the sequence is TLTMFGMVLAIGLLVDDAIVVV. Topologically, residues 414-441 are cytoplasmic; the sequence is ENVERVMMEDKLPPKEATEKSMSQIQGA. A helical transmembrane segment spans residues 442 to 460; that stretch reads LVGIAMVLSAVFIPMAFFG. Residues 461–473 lie on the Periplasmic side of the membrane; that stretch reads GSTGAIYRQFSIT. A helical transmembrane segment spans residues 474 to 496; it reads IVSAMALSVLVALILTPALCATL. At 497 to 537 the chain is on the cytoplasmic side; sequence LKPVSAEHHENKGGFFGWFNTTFDHSVNHYTNSVGKILGST. The chain crosses the membrane as a helical span at residues 538-556; it reads GRYLLIYALIVAGMVVLFL. The Periplasmic portion of the chain corresponds to 557–871; that stretch reads RLPSSFLPEE…SYQERLSGNQ (315 aa). The chain crosses the membrane as a helical span at residues 872 to 891; that stretch reads APALVAISFVVVFLCLAALY. Over 892–897 the chain is Cytoplasmic; that stretch reads ESWSIP. The helical transmembrane segment at 898–917 threads the bilayer; sequence VSVMLVVPLGIVGVLLAATL. Residues 918 to 923 lie on the Periplasmic side of the membrane; the sequence is FNQKND. Residues 924-945 form a helical membrane-spanning segment; the sequence is VYFMVGLLTTIGLSAKNAILIV. Residues 946 to 973 lie on the Cytoplasmic side of the membrane; that stretch reads EFAKDLMEKEGKGVVEATLMAVRMRLRP. Residues 974–992 traverse the membrane as a helical segment; that stretch reads ILMTSLAFILGVLPLAISN. Topologically, residues 993–1005 are periplasmic; it reads GAGSGAQNAVGIG. Residues 1006–1028 form a helical membrane-spanning segment; the sequence is VMGGMVSATLLAIFFVPVFFVVI. At 1029 to 1034 the chain is on the cytoplasmic side; sequence RRCFKG.

The protein belongs to the resistance-nodulation-cell division (RND) (TC 2.A.6) family. As to quaternary structure, part of the tripartite efflux system AcrEF-TolC, which is composed of an inner membrane transporter, AcrF, a periplasmic membrane fusion protein, AcrE, and an outer membrane component, TolC. The complex forms a large protein conduit and can translocate molecules across both the inner and outer membranes.

It localises to the cell inner membrane. Functionally, part of the tripartite efflux system AcrEF-TolC. Involved in the efflux of indole and organic solvents. The polypeptide is Multidrug export protein AcrF (acrF) (Escherichia coli (strain K12)).